The following is a 91-amino-acid chain: Probable Fe(2+)-trafficking protein (91 aa).

The protein belongs to the Fe(2+)-trafficking protein family. Monomer.

Functionally, could be a mediator in iron transactions between iron acquisition and iron-requiring processes, such as synthesis and/or repair of Fe-S clusters in biosynthetic enzymes. This is Probable Fe(2+)-trafficking protein from Escherichia coli O6:H1 (strain CFT073 / ATCC 700928 / UPEC).